The primary structure comprises 108 residues: Peptidyl-prolyl cis-trans isomerase FKBP1B (108 aa).

Residues 20–108 (GQICVVHYTG…IFDVELLNLE (89 aa)) enclose the PPIase FKBP-type domain.

It belongs to the FKBP-type PPIase family. FKBP1 subfamily. As to quaternary structure, identified in a complex composed of RYR2, FKBP1B, PKA catalytic subunit, PRKAR2A, AKAP6, and the protein phosphatases PP2A and PP1. Interacts directly with RYR2. As to expression, detected in heart muscle (at protein level). Ubiquitous.

It localises to the cytoplasm. It is found in the sarcoplasmic reticulum. The catalysed reaction is [protein]-peptidylproline (omega=180) = [protein]-peptidylproline (omega=0). Its activity is regulated as follows. Inhibited by both FK506 and rapamycin. Functionally, has the potential to contribute to the immunosuppressive and toxic effects of FK506 and rapamycin. PPIases accelerate the folding of proteins. It catalyzes the cis-trans isomerization of proline imidic peptide bonds in oligopeptides. The sequence is that of Peptidyl-prolyl cis-trans isomerase FKBP1B (Fkbp1b) from Rattus norvegicus (Rat).